We begin with the raw amino-acid sequence, 69 residues long: Pleurain-A4 (69 aa).

An N-terminal signal peptide occupies residues 1 to 22 (MFTLKKTLLLLFFLGTISISLC). The propeptide occupies 23–43 (KQERDADEDDGRKMTEEEVKR). Cys-63 and Cys-69 are joined by a disulfide.

Belongs to the frog skin active peptide (FSAP) family. Pleurain subfamily. In terms of tissue distribution, expressed by the skin glands.

Its subcellular location is the secreted. Functionally, antimicrobial peptide. Has activity against Gram-positive and -negative bacteria, and fungi. Has little hemolytic activity on red blood cells. The sequence is that of Pleurain-A4 from Nidirana pleuraden (Yunnan pond frog).